The following is a 63-amino-acid chain: Large ribosomal subunit protein bL32 (63 aa).

Residues 1-20 form a disordered region; the sequence is MANPKAKMSKSRRDKRRAQF. The segment covering 7 to 18 has biased composition (basic residues); that stretch reads KMSKSRRDKRRA.

Belongs to the bacterial ribosomal protein bL32 family.

The chain is Large ribosomal subunit protein bL32 from Chlorobaculum parvum (strain DSM 263 / NCIMB 8327) (Chlorobium vibrioforme subsp. thiosulfatophilum).